Consider the following 467-residue polypeptide: Cilia- and flagella-associated protein 97 (467 aa).

Disordered stretches follow at residues 1-20, 76-235, 336-370, and 412-467; these read MDRYGNLSDDGEVDHSFFDS, IAKP…DISP, RQAAKPRSKSLTPKKPMSAPTRLYHSAINRQKEQQ, and ALSP…AAWQ. A compositionally biased stretch (acidic residues) spans 124-135; the sequence is DNYYPDEEDSSE. The segment covering 162-177 has biased composition (polar residues); it reads DFVSTISSSDTEYSDT. Over residues 180 to 194 the composition is skewed to low complexity; sequence DDGASKSSYQSSKGS. The span at 198 to 216 shows a compositional bias: basic and acidic residues; it reads SPERKPSRSSMRELRHYAE. Residues 223–235 are compositionally biased toward polar residues; that stretch reads TDVTPLSTPDISP. A coiled-coil region spans residues 310 to 387; sequence KKNFSFSNDE…ALLKRLESVK (78 aa). A compositionally biased stretch (low complexity) spans 421 to 439; that stretch reads SVSRLSPSVSSGGFSRMSS.

It belongs to the CFAP97 family.

The sequence is that of Cilia- and flagella-associated protein 97 from Xenopus tropicalis (Western clawed frog).